Here is a 142-residue protein sequence, read N- to C-terminus: Large ribosomal subunit protein uL11 (142 aa).

The protein belongs to the universal ribosomal protein uL11 family. Part of the ribosomal stalk of the 50S ribosomal subunit. Interacts with L10 and the large rRNA to form the base of the stalk. L10 forms an elongated spine to which L12 dimers bind in a sequential fashion forming a multimeric L10(L12)X complex. One or more lysine residues are methylated.

In terms of biological role, forms part of the ribosomal stalk which helps the ribosome interact with GTP-bound translation factors. The polypeptide is Large ribosomal subunit protein uL11 (Leptospira interrogans serogroup Icterohaemorrhagiae serovar copenhageni (strain Fiocruz L1-130)).